The chain runs to 153 residues: Arginine regulator (153 aa).

This sequence belongs to the ArgR family.

It is found in the cytoplasm. Its pathway is amino-acid degradation; L-arginine degradation via ADI pathway. Regulates the transcription of the arc operon, involved in arginine catabolism. This chain is Arginine regulator (argR1), found in Lactiplantibacillus plantarum (strain ATCC BAA-793 / NCIMB 8826 / WCFS1) (Lactobacillus plantarum).